The following is a 143-amino-acid chain: Lutropin subunit beta (143 aa).

A signal peptide spans 1–22; sequence MEMLQGLLLLWLLLLNVGGVWT. Disulfide bonds link C31/C79, C45/C94, C48/C132, C56/C110, C60/C112, and C115/C122. N35 carries N-linked (GlcNAc...) asparagine glycosylation.

It belongs to the glycoprotein hormones subunit beta family. Heterodimer of a common alpha chain and a unique beta chain which confers biological specificity to thyrotropin, lutropin, follitropin and gonadotropin.

The protein localises to the secreted. Promotes spermatogenesis and ovulation by stimulating the testes and ovaries to synthesize steroids. This is Lutropin subunit beta (LHB) from Felis catus (Cat).